A 501-amino-acid polypeptide reads, in one-letter code: Aldehyde dehydrogenase, cytosolic 1 (501 aa).

Position 246 to 251 (Gly246 to Gly251) interacts with NAD(+). Glu269 acts as the Proton acceptor in catalysis. The active-site Nucleophile is Cys303.

This sequence belongs to the aldehyde dehydrogenase family. As to quaternary structure, homotetramer. In terms of tissue distribution, eye specific, with very high expression in the lens.

The protein resides in the cytoplasm. It carries out the reaction an aldehyde + NAD(+) + H2O = a carboxylate + NADH + 2 H(+). It participates in alcohol metabolism; ethanol degradation; acetate from ethanol: step 2/2. Functionally, major component of the eye of elephant shrews, which in contrast to other mammals, possesses both a lens- and a non-lens class-1 aldehyde dehydrogenase 1. This eye-specific form is a structural protein of the lens and, in other part of the eye, serves as the major form of ALDH1. Can convert/oxidize retinaldehyde to retinoic acid. In Elephantulus edwardii (Cape long-eared elephant shrew), this protein is Aldehyde dehydrogenase, cytosolic 1 (ALDH1).